Consider the following 194-residue polypeptide: Large ribosomal subunit protein eL15 (194 aa).

The segment at 160–194 (RGLTSAGKKGRGLMYKGKGAEKVRPSVRANSKKAK) is disordered.

Belongs to the eukaryotic ribosomal protein eL15 family.

In Methanococcus maripaludis (strain C6 / ATCC BAA-1332), this protein is Large ribosomal subunit protein eL15.